The chain runs to 502 residues: ATP synthase subunit alpha (502 aa).

Positions 115 to 136 (VDGLGPIHTTKTRPIESPAPGV) are disordered. 169-176 (GDRQTGKT) serves as a coordination point for ATP.

Belongs to the ATPase alpha/beta chains family. In terms of assembly, F-type ATPases have 2 components, CF(1) - the catalytic core - and CF(0) - the membrane proton channel. CF(1) has five subunits: alpha(3), beta(3), gamma(1), delta(1), epsilon(1). CF(0) has three main subunits: a(1), b(2) and c(9-12). The alpha and beta chains form an alternating ring which encloses part of the gamma chain. CF(1) is attached to CF(0) by a central stalk formed by the gamma and epsilon chains, while a peripheral stalk is formed by the delta and b chains.

The protein resides in the cell membrane. The catalysed reaction is ATP + H2O + 4 H(+)(in) = ADP + phosphate + 5 H(+)(out). Produces ATP from ADP in the presence of a proton gradient across the membrane. The alpha chain is a regulatory subunit. The chain is ATP synthase subunit alpha from Bacillus cytotoxicus (strain DSM 22905 / CIP 110041 / 391-98 / NVH 391-98).